The chain runs to 65 residues: MQKIKTNRSAAKRFKRTKSGKFVYSKSHGSHILTKKNRKRKRSLRKSHILDSSNNKELKRLLPGM.

The tract at residues 1 to 65 (MQKIKTNRSA…KELKRLLPGM (65 aa)) is disordered. 2 stretches are compositionally biased toward basic residues: residues 10 to 19 (AAKRFKRTKS) and 33 to 47 (LTKK…LRKS). The span at 54-65 (NNKELKRLLPGM) shows a compositional bias: basic and acidic residues.

This sequence belongs to the bacterial ribosomal protein bL35 family.

The protein is Large ribosomal subunit protein bL35 of Desulfosudis oleivorans (strain DSM 6200 / JCM 39069 / Hxd3) (Desulfococcus oleovorans).